The sequence spans 243 residues: Ribosomal RNA small subunit methyltransferase E 2 (243 aa).

It belongs to the RNA methyltransferase RsmE family.

Its subcellular location is the cytoplasm. It carries out the reaction uridine(1498) in 16S rRNA + S-adenosyl-L-methionine = N(3)-methyluridine(1498) in 16S rRNA + S-adenosyl-L-homocysteine + H(+). Its function is as follows. Specifically methylates the N3 position of the uracil ring of uridine 1498 (m3U1498) in 16S rRNA. Acts on the fully assembled 30S ribosomal subunit. In Borreliella burgdorferi (strain ATCC 35210 / DSM 4680 / CIP 102532 / B31) (Borrelia burgdorferi), this protein is Ribosomal RNA small subunit methyltransferase E 2 (rsmE2).